The sequence spans 380 residues: Cytochrome b (380 aa).

4 helical membrane passes run 34 to 54 (FGSLLGICLTTQILTGLLLAM), 78 to 99 (WLIRNLHANGASFFFICIYLHI), 114 to 134 (WNTGIILLLTLMATAFVGYVL), and 179 to 199 (FFALHFLLPFMIAGLTLIHLT). Heme b contacts are provided by histidine 84 and histidine 98. Positions 183 and 197 each coordinate heme b. Histidine 202 is a binding site for a ubiquinone. A run of 4 helical transmembrane segments spans residues 227-247 (TKDTLGFALMLLPLTTLALFS), 289-309 (LGGVLALAASVLILFLIPLLH), 321-341 (LSQLLFWTLVANLTILTWIGS), and 348-368 (FIIIGQLASLTYFTILLILFP).

The protein belongs to the cytochrome b family. As to quaternary structure, the cytochrome bc1 complex contains 11 subunits: 3 respiratory subunits (MT-CYB, CYC1 and UQCRFS1), 2 core proteins (UQCRC1 and UQCRC2) and 6 low-molecular weight proteins (UQCRH/QCR6, UQCRB/QCR7, UQCRQ/QCR8, UQCR10/QCR9, UQCR11/QCR10 and a cleavage product of UQCRFS1). This cytochrome bc1 complex then forms a dimer. Heme b serves as cofactor.

Its subcellular location is the mitochondrion inner membrane. Its function is as follows. Component of the ubiquinol-cytochrome c reductase complex (complex III or cytochrome b-c1 complex) that is part of the mitochondrial respiratory chain. The b-c1 complex mediates electron transfer from ubiquinol to cytochrome c. Contributes to the generation of a proton gradient across the mitochondrial membrane that is then used for ATP synthesis. The protein is Cytochrome b (MT-CYB) of Aptenodytes patagonicus (King penguin).